The primary structure comprises 446 residues: Dihydroorotate dehydrogenase (quinone), mitochondrial (446 aa).

A mitochondrion-targeting transit peptide spans 1 to 13 (MHSRPLPTLGRHA). A helical membrane pass occupies residues 40–57 (AILYTAGILGGAFAGYYL). FMN is bound by residues 125–129 (AGLDK) and serine 149. Position 129 (lysine 129) interacts with substrate. Residue 174 to 178 (NRYGF) coordinates substrate. Positions 222 and 252 each coordinate FMN. Substrate contacts are provided by residues asparagine 252 and 252–257 (NVSSPN). Serine 255 serves as the catalytic Nucleophile. Lysine 303 and serine 331 together coordinate FMN. 332 to 333 (NT) is a binding site for substrate. FMN is bound by residues glycine 357, glycine 387, and 408–409 (YT).

The protein belongs to the dihydroorotate dehydrogenase family. Type 2 subfamily. FMN serves as cofactor.

It is found in the mitochondrion inner membrane. The enzyme catalyses (S)-dihydroorotate + a quinone = orotate + a quinol. The protein operates within pyrimidine metabolism; UMP biosynthesis via de novo pathway; orotate from (S)-dihydroorotate (quinone route): step 1/1. Its activity is regulated as follows. The activity is dependent of the presence of oxygen. In terms of biological role, catalyzes the conversion of dihydroorotate to orotate with quinone as electron acceptor. This is Dihydroorotate dehydrogenase (quinone), mitochondrial (URA9) from Lachancea kluyveri (strain ATCC 58438 / CBS 3082 / BCRC 21498 / NBRC 1685 / JCM 7257 / NCYC 543 / NRRL Y-12651) (Yeast).